A 217-amino-acid polypeptide reads, in one-letter code: Cytochrome c biogenesis ATP-binding export protein CcmA (217 aa).

Positions 6 to 215 constitute an ABC transporter domain; that stretch reads FSAKNLACVR…HLDQFAVAEE (210 aa). 38–45 provides a ligand contact to ATP; that stretch reads GPNGSGKS.

This sequence belongs to the ABC transporter superfamily. CcmA exporter (TC 3.A.1.107) family. In terms of assembly, the complex is composed of two ATP-binding proteins (CcmA) and two transmembrane proteins (CcmB).

The protein localises to the cell inner membrane. It carries out the reaction heme b(in) + ATP + H2O = heme b(out) + ADP + phosphate + H(+). In terms of biological role, part of the ABC transporter complex CcmAB involved in the biogenesis of c-type cytochromes; once thought to export heme, this seems not to be the case, but its exact role is uncertain. Responsible for energy coupling to the transport system. This Paramagnetospirillum magneticum (strain ATCC 700264 / AMB-1) (Magnetospirillum magneticum) protein is Cytochrome c biogenesis ATP-binding export protein CcmA.